The chain runs to 313 residues: Dimethyladenosine transferase (313 aa).

The segment at 1–21 (MPKVKSGAIGRRRGRQEQRRE) is disordered. S-adenosyl-L-methionine is bound by residues histidine 37, leucine 39, glycine 64, glutamate 85, aspartate 113, and asparagine 128.

This sequence belongs to the class I-like SAM-binding methyltransferase superfamily. rRNA adenine N(6)-methyltransferase family. Part of the small subunit (SSU) processome, composed of more than 70 proteins and the RNA chaperone small nucleolar RNA (snoRNA) U3.

It is found in the nucleus. The protein localises to the nucleoplasm. Its subcellular location is the nucleolus. It carries out the reaction adenosine(1779)/adenosine(1780) in 18S rRNA + 4 S-adenosyl-L-methionine = N(6)-dimethyladenosine(1779)/N(6)-dimethyladenosine(1780) in 18S rRNA + 4 S-adenosyl-L-homocysteine + 4 H(+). Functionally, specifically dimethylates two adjacent adenosines in the loop of a conserved hairpin near the 3'-end of 18S rRNA in the 40S particle. Involved in the pre-rRNA processing steps leading to small-subunit rRNA production independently of its RNA-modifying catalytic activity. Part of the small subunit (SSU) processome, first precursor of the small eukaryotic ribosomal subunit. During the assembly of the SSU processome in the nucleolus, many ribosome biogenesis factors, an RNA chaperone and ribosomal proteins associate with the nascent pre-rRNA and work in concert to generate RNA folding, modifications, rearrangements and cleavage as well as targeted degradation of pre-ribosomal RNA by the RNA exosome. This is Dimethyladenosine transferase (DIMT1) from Macaca fascicularis (Crab-eating macaque).